The chain runs to 299 residues: MQENTRLRIAIQKSGRLSKESMKLLSECGVKMHIHEQSLIAFSTNLPIDILRVRDDDIPGLIFDGVVDLGIIGENVLEENELKRQSLGENPNYKLLKKLDFGFCRLSLALPQENKFQNLKDFEGLRIATSYPQLLKRFMKENGINYKNCMLTGSIEVAPRANLADAICDLVSSGATLQANNLKEIKVIYESRACLIQKENALIKEKQALVDKIMLRVAGVMQARESKYIMLHAPKEKLDKIQALLPGVERPTILPLAHDEKNVALHMVSKENLFWETMEALKEEGASSILVLPIEKMLK.

This sequence belongs to the ATP phosphoribosyltransferase family. Long subfamily. The cofactor is Mg(2+).

It localises to the cytoplasm. It carries out the reaction 1-(5-phospho-beta-D-ribosyl)-ATP + diphosphate = 5-phospho-alpha-D-ribose 1-diphosphate + ATP. It functions in the pathway amino-acid biosynthesis; L-histidine biosynthesis; L-histidine from 5-phospho-alpha-D-ribose 1-diphosphate: step 1/9. Feedback inhibited by histidine. In terms of biological role, catalyzes the condensation of ATP and 5-phosphoribose 1-diphosphate to form N'-(5'-phosphoribosyl)-ATP (PR-ATP). Has a crucial role in the pathway because the rate of histidine biosynthesis seems to be controlled primarily by regulation of HisG enzymatic activity. This is ATP phosphoribosyltransferase from Campylobacter jejuni subsp. doylei (strain ATCC BAA-1458 / RM4099 / 269.97).